A 326-amino-acid chain; its full sequence is Tryptophan--tRNA ligase (326 aa).

ATP is bound by residues Gln-11–Thr-13 and Gly-19–Asn-20. The 'HIGH' region signature appears at Pro-12 to Asn-20. Asp-135 is a binding site for L-tryptophan. ATP contacts are provided by residues Gly-147–Asp-149, Val-186, and Lys-195–Ser-199. Residues Lys-195–Ser-199 carry the 'KMSKS' region motif.

This sequence belongs to the class-I aminoacyl-tRNA synthetase family. Homodimer.

Its subcellular location is the cytoplasm. The enzyme catalyses tRNA(Trp) + L-tryptophan + ATP = L-tryptophyl-tRNA(Trp) + AMP + diphosphate + H(+). In terms of biological role, catalyzes the attachment of tryptophan to tRNA(Trp). The chain is Tryptophan--tRNA ligase from Helicobacter pylori (strain J99 / ATCC 700824) (Campylobacter pylori J99).